An 82-amino-acid chain; its full sequence is Delta-actitoxin-Aeq2a (82 aa).

The signal sequence occupies residues 1-19 (MNRLMILVFAAVFLALASA). The propeptide occupies 20–26 (DEDVDIA). Disulfide bonds link cysteine 32–cysteine 79, cysteine 34–cysteine 69, and cysteine 62–cysteine 80.

This sequence belongs to the sea anemone sodium channel inhibitory toxin family. Type I subfamily.

It localises to the secreted. Its subcellular location is the nematocyst. Functionally, binds specifically to voltage-gated sodium channels (Nav), thereby delaying their inactivation during signal transduction. Causes death to crabs (minimum lethal dose of 25 ug/kg) and mice. The protein is Delta-actitoxin-Aeq2a of Actinia equina (Beadlet anemone).